We begin with the raw amino-acid sequence, 105 residues long: Insulin (105 aa).

The first 24 residues, 1–24 (MALWTRLVPLLALLALWAPAPAHA), serve as a signal peptide directing secretion. 3 disulfide bridges follow: Cys-31-Cys-91, Cys-43-Cys-104, and Cys-90-Cys-95. A propeptide spans 57–82 (EVEGPQVGALELAGGPGAGGLEGPPQ) (c peptide).

The protein belongs to the insulin family. In terms of assembly, heterodimer of a B chain and an A chain linked by two disulfide bonds.

Its subcellular location is the secreted. In terms of biological role, insulin decreases blood glucose concentration. It increases cell permeability to monosaccharides, amino acids and fatty acids. It accelerates glycolysis, the pentose phosphate cycle, and glycogen synthesis in liver. The polypeptide is Insulin (INS) (Ovis aries (Sheep)).